The following is a 131-amino-acid chain: uncharacterized protein (131 aa).

The next 2 membrane-spanning stretches (helical) occupy residues 68-88 and 94-114; these read VVRA…VAPI and VLGA…IVAI.

The protein localises to the cell membrane. This is an uncharacterized protein from Methanocaldococcus jannaschii (strain ATCC 43067 / DSM 2661 / JAL-1 / JCM 10045 / NBRC 100440) (Methanococcus jannaschii).